The chain runs to 432 residues: METITISEVPKHVGETVKIGVWLTDKRSSGKIAFLQLRDGTGFFQGIIRKNDVSEEKFDSAKHDLHQETSFWVTGEIAEDKRSKFGYEIHIKDFDIVGESEDYPIGNKEHGIDFLLDNRHLWLRSRKPWALMRIRSRVKLATMEFFEKHGFTQFDAPELTGSAPEGTTELFETDYFDRSAFLSQSGQLYAEAGAMALGRVYTMGPTFRAEKSKTRRHLMEFWMIEPEMAWMHQDESLKIQEQYIAYLVQDLIDHCARELEMVGRSVESLKPFTELPYPRITYKEAIEILQKGGFDVEYGADFGSPEETYLADQFQKPVFILNYPKEIKAFYMPEDPEDSRQVICADLLAPEGYGEIIGGSERSYDYEYITNKLEENGLSKEDYGWYDDLRKYGSIPHSGFGMGLERFLAWITLQDHIRETIPFPRMLNRLNP.

The protein belongs to the class-II aminoacyl-tRNA synthetase family. In terms of assembly, homodimer.

It localises to the cytoplasm. It carries out the reaction tRNA(Asn) + L-asparagine + ATP = L-asparaginyl-tRNA(Asn) + AMP + diphosphate + H(+). The sequence is that of Asparagine--tRNA ligase from Limosilactobacillus reuteri (strain DSM 20016) (Lactobacillus reuteri).